The chain runs to 230 residues: Protein-L-isoaspartate O-methyltransferase (230 aa).

Serine 65 is an active-site residue.

It belongs to the methyltransferase superfamily. L-isoaspartyl/D-aspartyl protein methyltransferase family. As to quaternary structure, monomer. In terms of tissue distribution, highest contents in seeds.

It localises to the cytoplasm. The catalysed reaction is [protein]-L-isoaspartate + S-adenosyl-L-methionine = [protein]-L-isoaspartate alpha-methyl ester + S-adenosyl-L-homocysteine. In terms of biological role, catalyzes the methyl esterification of L-isoaspartyl residues in peptides and proteins that result from spontaneous decomposition of normal L-aspartyl and L-asparaginyl residues. It plays a role in the repair and/or degradation of damaged proteins. This enzyme does not act on D-aspartyl residues. This is Protein-L-isoaspartate O-methyltransferase (PCM) from Triticum aestivum (Wheat).